The sequence spans 398 residues: Chalcone synthase (398 aa).

C169 is a catalytic residue.

This sequence belongs to the thiolase-like superfamily. Chalcone/stilbene synthases family.

It catalyses the reaction (E)-4-coumaroyl-CoA + 3 malonyl-CoA + 3 H(+) = 2',4,4',6'-tetrahydroxychalcone + 3 CO2 + 4 CoA. The protein operates within secondary metabolite biosynthesis; flavonoid biosynthesis. The primary product of this enzyme is 4,2',4',6'-tetrahydroxychalcone (also termed naringenin-chalcone or chalcone) which can under specific conditions spontaneously isomerize into naringenin. The protein is Chalcone synthase (CHS) of Petroselinum crispum (Parsley).